The sequence spans 101 residues: NAD(P)H-quinone oxidoreductase subunit 4L, chloroplastic (101 aa).

Transmembrane regions (helical) follow at residues 2-22 (IFQS…YGLL), 32-52 (MSLE…SNFV), and 61-81 (VLAL…LAII).

The protein belongs to the complex I subunit 4L family. As to quaternary structure, NDH is composed of at least 16 different subunits, 5 of which are encoded in the nucleus.

The protein localises to the plastid. It localises to the chloroplast thylakoid membrane. It carries out the reaction a plastoquinone + NADH + (n+1) H(+)(in) = a plastoquinol + NAD(+) + n H(+)(out). The catalysed reaction is a plastoquinone + NADPH + (n+1) H(+)(in) = a plastoquinol + NADP(+) + n H(+)(out). NDH shuttles electrons from NAD(P)H:plastoquinone, via FMN and iron-sulfur (Fe-S) centers, to quinones in the photosynthetic chain and possibly in a chloroplast respiratory chain. The immediate electron acceptor for the enzyme in this species is believed to be plastoquinone. Couples the redox reaction to proton translocation, and thus conserves the redox energy in a proton gradient. This Nephroselmis olivacea (Green alga) protein is NAD(P)H-quinone oxidoreductase subunit 4L, chloroplastic.